Reading from the N-terminus, the 332-residue chain is Delta-aminolevulinic acid dehydratase (332 aa).

Lys-202 (schiff-base intermediate with substrate) is an active-site residue. Positions 212 and 225 each coordinate 5-aminolevulinate. Lys-256 acts as the Schiff-base intermediate with substrate in catalysis. 5-aminolevulinate contacts are provided by Ser-282 and Tyr-321.

The protein belongs to the ALAD family. Homohexamer.

It carries out the reaction 2 5-aminolevulinate = porphobilinogen + 2 H2O + H(+). It participates in porphyrin-containing compound metabolism; protoporphyrin-IX biosynthesis; coproporphyrinogen-III from 5-aminolevulinate: step 1/4. Catalyzes an early step in the biosynthesis of tetrapyrroles. Binds two molecules of 5-aminolevulinate per subunit, each at a distinct site, and catalyzes their condensation to form porphobilinogen. The polypeptide is Delta-aminolevulinic acid dehydratase (hemB) (Rhodobacter capsulatus (Rhodopseudomonas capsulata)).